A 175-amino-acid chain; its full sequence is Universal stress protein A-like protein (175 aa).

11 residues coordinate AMP: Ala11, Val12, Asn13, Ser26, Cys27, Val53, Gly131, Arg133, Thr145, Val146, and Ser147.

It belongs to the universal stress protein A family. Homohexamer.

This chain is Universal stress protein A-like protein, found in Arabidopsis thaliana (Mouse-ear cress).